A 707-amino-acid polypeptide reads, in one-letter code: uncharacterized protein (707 aa).

Disordered stretches follow at residues 15–122 (ALAK…LESY) and 667–707 (ESVQ…DIDE). Basic and acidic residues-rich tracts occupy residues 18-32 (KKND…DKGI) and 40-52 (EGKD…DVEK). At Ser-112 the chain carries Phosphoserine. Positions 659–700 (EEQRKLIRESVQQDQEHKEQMRQKKKQALKSDDIELDDLSEE) form a coiled coil. The segment covering 692 to 707 (IELDDLSEEEAEDIDE) has biased composition (acidic residues).

The protein belongs to the NOC2 family.

The protein resides in the nucleus. Its subcellular location is the nucleolus. This is an uncharacterized protein from Schizosaccharomyces pombe (strain 972 / ATCC 24843) (Fission yeast).